The primary structure comprises 291 residues: Probable 2-(5''-triphosphoribosyl)-3'-dephosphocoenzyme-A synthase (291 aa).

The protein belongs to the CitG/MdcB family.

It carries out the reaction 3'-dephospho-CoA + ATP = 2'-(5''-triphospho-alpha-D-ribosyl)-3'-dephospho-CoA + adenine. Involved in the formation of 2-(5''-phosphoribosyl)-3'-dephosphocoenzyme-A, the prosthetic group of the acyl-carrier protein of the malonate decarboxylase. In Pseudomonas savastanoi pv. phaseolicola (strain 1448A / Race 6) (Pseudomonas syringae pv. phaseolicola (strain 1448A / Race 6)), this protein is Probable 2-(5''-triphosphoribosyl)-3'-dephosphocoenzyme-A synthase.